Here is a 101-residue protein sequence, read N- to C-terminus: Small ribosomal subunit protein uS14 (101 aa).

Belongs to the universal ribosomal protein uS14 family. In terms of assembly, part of the 30S ribosomal subunit. Contacts proteins S3 and S10.

In terms of biological role, binds 16S rRNA, required for the assembly of 30S particles and may also be responsible for determining the conformation of the 16S rRNA at the A site. The sequence is that of Small ribosomal subunit protein uS14 from Polynucleobacter asymbioticus (strain DSM 18221 / CIP 109841 / QLW-P1DMWA-1) (Polynucleobacter necessarius subsp. asymbioticus).